The chain runs to 498 residues: Glutamyl-tRNA(Gln) amidotransferase subunit A (498 aa).

Active-site charge relay system residues include Lys-85 and Ser-160. Residue Ser-184 is the Acyl-ester intermediate of the active site.

It belongs to the amidase family. GatA subfamily. As to quaternary structure, heterotrimer of A, B and C subunits.

The enzyme catalyses L-glutamyl-tRNA(Gln) + L-glutamine + ATP + H2O = L-glutaminyl-tRNA(Gln) + L-glutamate + ADP + phosphate + H(+). In terms of biological role, allows the formation of correctly charged Gln-tRNA(Gln) through the transamidation of misacylated Glu-tRNA(Gln) in organisms which lack glutaminyl-tRNA synthetase. The reaction takes place in the presence of glutamine and ATP through an activated gamma-phospho-Glu-tRNA(Gln). The sequence is that of Glutamyl-tRNA(Gln) amidotransferase subunit A from Mycolicibacterium vanbaalenii (strain DSM 7251 / JCM 13017 / BCRC 16820 / KCTC 9966 / NRRL B-24157 / PYR-1) (Mycobacterium vanbaalenii).